Here is a 570-residue protein sequence, read N- to C-terminus: Adenine deaminase (570 aa).

The protein belongs to the metallo-dependent hydrolases superfamily. Adenine deaminase family. It depends on Mn(2+) as a cofactor.

It catalyses the reaction adenine + H2O + H(+) = hypoxanthine + NH4(+). This Clostridium acetobutylicum (strain ATCC 824 / DSM 792 / JCM 1419 / IAM 19013 / LMG 5710 / NBRC 13948 / NRRL B-527 / VKM B-1787 / 2291 / W) protein is Adenine deaminase.